The sequence spans 390 residues: Aspergillopepsin-1 (390 aa).

The N-terminal stretch at 1–19 is a signal peptide; sequence MVNTSLLAALTAYAVAVSA. Positions 20 to 67 are cleaved as a propeptide — activation peptide; that stretch reads APTAPQVKGFSVNQVAVPKGVYRHPAAQLAKAYGKYHATVPTQVAAAA. Thr-70 is a glycosylation site (O-linked (Man...) threonine). Positions 84-387 constitute a Peptidase A1 domain; it reads YITQVTVGDD…DASGPRLGFA (304 aa). Residues Asp-100 and Asp-281 contribute to the active site.

The protein belongs to the peptidase A1 family.

The protein resides in the secreted. It catalyses the reaction Hydrolysis of proteins with broad specificity. Generally favors hydrophobic residues in P1 and P1', but also accepts Lys in P1, which leads to activation of trypsinogen. Does not clot milk.. Inhibited by the microbial peptide pepstatin. Its function is as follows. Secreted aspartic endopeptidase that allows assimilation of proteinaceous substrates. The scissile peptide bond is attacked by a nucleophilic water molecule activated by two aspartic residues in the active site. Shows a broad primary substrate specificity. Favors hydrophobic residues at the P1 and P1' positions, but also accepts a lysine residue in the P1 position, leading to the activation of trypsinogen and chymotrypsinogen A. The polypeptide is Aspergillopepsin-1 (pepA) (Aspergillus oryzae (Yellow koji mold)).